The chain runs to 66 residues: Small vasohibin-binding protein (66 aa).

Over residues methionine 1–lysine 23 the composition is skewed to basic and acidic residues. Positions methionine 1–lysine 32 are disordered. The stretch at alanine 5–glutamine 52 forms a coiled coil.

Belongs to the SVBP family. In terms of assembly, interacts with VASH1 and VASH2.

It localises to the cytoplasm. The protein localises to the secreted. Its subcellular location is the cytoskeleton. Its function is as follows. Enhances the tyrosine carboxypeptidase activity of VASH1 and VASH2, thereby promoting the removal of the C-terminal tyrosine residue of alpha-tubulin. Also required to enhance the solubility and secretion of VASH1 and VASH2. Plays a role in axon and excitatory synapse formation. This Bos taurus (Bovine) protein is Small vasohibin-binding protein.